We begin with the raw amino-acid sequence, 958 residues long: Eukaryotic translation initiation factor 3 subunit A (958 aa).

The stretch at 93 to 123 (MHLATERAELARNQAQALEEALDVEDLEADK) forms a coiled coil. Residues 316–513 (LQLIASSVVL…GLSSLVNRVL (198 aa)) enclose the PCI domain. Coiled coils occupy residues 548-696 (EALS…AKRE) and 796-861 (LRSE…LRKS). Residues 804–859 (KRLQEEEEARKREEAERRKKEEAERQAKLDEIAEKQRRRMLELEEKEKREREEILR) are compositionally biased toward basic and acidic residues. The tract at residues 804 to 958 (KRLQEEEEAR…SRTSWPASRR (155 aa)) is disordered. Residues 877 to 894 (PAELGGAAPIPAAAATAP) are compositionally biased toward low complexity. Over residues 929-942 (KPDDRPSWRDERKP) the composition is skewed to basic and acidic residues. Residues 946–958 (GSGSRTSWPASRR) are compositionally biased toward polar residues.

Belongs to the eIF-3 subunit A family. As to quaternary structure, component of the eukaryotic translation initiation factor 3 (eIF-3) complex.

It localises to the cytoplasm. In terms of biological role, RNA-binding component of the eukaryotic translation initiation factor 3 (eIF-3) complex, which is involved in protein synthesis of a specialized repertoire of mRNAs and, together with other initiation factors, stimulates binding of mRNA and methionyl-tRNAi to the 40S ribosome. The eIF-3 complex specifically targets and initiates translation of a subset of mRNAs involved in cell proliferation. The polypeptide is Eukaryotic translation initiation factor 3 subunit A (TIF3A1) (Nicotiana tabacum (Common tobacco)).